The chain runs to 454 residues: Probable ECA polymerase (454 aa).

A run of 11 helical transmembrane segments spans residues 3 to 23 (LGQF…ILTL), 39 to 59 (FSML…MLVF), 61 to 81 (FGVA…ATAF), 119 to 139 (LALV…FLLF), 154 to 174 (GVAL…VYFL), 180 to 200 (AWFF…VIVG), 201 to 221 (GTRA…IVRG), 222 to 242 (WITL…MFWL), 340 to 360 (LVVM…GLII), 377 to 397 (YKAA…IVLA), and 409 to 429 (VFFC…YWLF).

The protein belongs to the WzyE family. Probably part of a complex composed of WzxE, WzyE and WzzE.

It is found in the cell inner membrane. It functions in the pathway bacterial outer membrane biogenesis; enterobacterial common antigen biosynthesis. Probably involved in the polymerization of enterobacterial common antigen (ECA) trisaccharide repeat units. In Yersinia pestis bv. Antiqua (strain Angola), this protein is Probable ECA polymerase.